Consider the following 316-residue polypeptide: Protoheme IX farnesyltransferase (316 aa).

9 helical membrane-spanning segments follow: residues 32 to 52, 53 to 73, 93 to 113, 116 to 136, 152 to 172, 180 to 200, 221 to 241, 252 to 271, and 289 to 309; these read VMSL…GHIN, PVLG…SGAL, IPAG…LSGF, VILG…TIFF, NIVI…ACVT, TVLF…LALF, VTKH…VLPS, LVAA…VWRM, and IFYL…AILV.

Belongs to the UbiA prenyltransferase family. Protoheme IX farnesyltransferase subfamily.

It localises to the cell inner membrane. The catalysed reaction is heme b + (2E,6E)-farnesyl diphosphate + H2O = Fe(II)-heme o + diphosphate. It participates in porphyrin-containing compound metabolism; heme O biosynthesis; heme O from protoheme: step 1/1. Functionally, converts heme B (protoheme IX) to heme O by substitution of the vinyl group on carbon 2 of heme B porphyrin ring with a hydroxyethyl farnesyl side group. This chain is Protoheme IX farnesyltransferase, found in Rhizobium etli (strain ATCC 51251 / DSM 11541 / JCM 21823 / NBRC 15573 / CFN 42).